The sequence spans 280 residues: uncharacterized protein (280 aa).

The next 6 membrane-spanning stretches (helical) occupy residues 3–23 (ILIT…GMYI), 52–72 (FGLF…GSIV), 81–101 (INGL…NLQI), 123–143 (NWLV…LILL), 196–216 (FADI…IIIG), and 233–253 (IFAC…LLHI).

It is found in the cell membrane. This is an uncharacterized protein from Rickettsia prowazekii (strain Madrid E).